Reading from the N-terminus, the 234-residue chain is Conidial surface nicotinamide adenine dinucleotide glycohydrolase nadA (234 aa).

Residues 1–20 (MIFTNAILVISALLPATVLS) form the signal peptide. The interval 21–117 (LQHTEDSLFP…LDTEEQPILG (97 aa)) is thump. Cystine bridges form between cysteine 33–cysteine 80 and cysteine 38–cysteine 50. 3 N-linked (GlcNAc...) asparagine glycosylation sites follow: asparagine 45, asparagine 95, and asparagine 118. The region spanning 120-212 (TLPVGMKLDR…GLIDDGYLRR (93 aa)) is the TNT domain. Residue arginine 129 is part of the active site. Residues phenylalanine 130, threonine 136, and arginine 148 each coordinate NAD(+). The active site involves glutamine 194. Positions 216, 219, 220, and 223 each coordinate Ca(2+).

Belongs to the fungal surface NADase family. In terms of assembly, homodimer. In terms of processing, N-glycosylated.

The protein resides in the secreted. The catalysed reaction is NAD(+) + H2O = ADP-D-ribose + nicotinamide + H(+). It carries out the reaction NADP(+) + H2O = ADP-D-ribose 2'-phosphate + nicotinamide + H(+). With respect to regulation, the catalytic activity is positively regulated by calcium via its binding to the calcium-binding site. In terms of biological role, conidial surface nicotinamide adenine dinucleotide glycohydrolase that cleave NAD(+) and NADP(+) but not their reduced counterparts, NADH and NADPH. Lacks both ADP-ribosyl cyclase and base exchange activity and does not mediate synthesis of calcium messengers cADPR or NAADP. Plays a role in pathogenicity by depleting the host's NAD(+) pool. The sequence is that of Conidial surface nicotinamide adenine dinucleotide glycohydrolase nadA from Aspergillus fumigatus (strain ATCC MYA-4609 / CBS 101355 / FGSC A1100 / Af293) (Neosartorya fumigata).